A 479-amino-acid chain; its full sequence is Auxin transporter-like protein 1 (479 aa).

The Cytoplasmic segment spans residues 1 to 58 (MLSEKQGEETMMSSLNETIELNEEREEEKGASPGSGFKNFLWHGGSVYDAWFSCASNQ). A helical membrane pass occupies residues 59-76 (VAQVLLTLPYSFSQLGMI). At 77 to 78 (SG) the chain is on the extracellular side. The chain crosses the membrane as a helical span at residues 79–99 (IIFQVFYGLMGSWTAYLISIL). The Cytoplasmic portion of the chain corresponds to 100–134 (YVEYRSRKEKENVSFKNHVIQWFEVLEGLLGPYWK). The helical transmembrane segment at 135-155 (AIGLAFNCTFLLFGSVIQLIA) threads the bilayer. Over 156–171 (CASNIYYINDHLDKRT) the chain is Extracellular. Residues 172 to 192 (WTYIFGACCATTVFIPSFHNY) form a helical membrane-spanning segment. The Cytoplasmic portion of the chain corresponds to 193–195 (RIW). The helical transmembrane segment at 196-216 (SFLGLGMTTYTAWYMTIAAIV) threads the bilayer. At 217 to 231 (HGQVENVVHSGPKKM) the chain is on the extracellular side. Residues 232-252 (VWYFTGATNILYTFGGHAVTV) traverse the membrane as a helical segment. Residues 253-265 (EIMHAMWKPQKFK) lie on the Cytoplasmic side of the membrane. A helical membrane pass occupies residues 266–286 (AIYFFATLYVFTLTLPSAIAV). The Extracellular segment spans residues 287–313 (YWAFGDQLLDHSNAFSLLPRNAWRDAG). Residues 314–334 (VILMLIHQFITFGFACTPLYF) form a helical membrane-spanning segment. Residues 335-355 (VWEKVIGMHDTKSIFLRALAR) lie on the Cytoplasmic side of the membrane. Residues 356-376 (LPVVIPIWFLAIIFPFFGPIN) form a helical membrane-spanning segment. S377 is a topological domain (extracellular). The helical transmembrane segment at 378–398 (AVGALLVSFTVYVIPASAHML) threads the bilayer. At 399 to 421 (TYRSASARQNAAEKLPKVIPSWT) the chain is on the cytoplasmic side. Residues 422 to 442 (LMYVINAFVVIWVTIVGFGFG) form a helical membrane-spanning segment. Residues 443–479 (GWASMTNFIKQVDTFGLFAKCYQCPPKLPASNHTMHH) lie on the Extracellular side of the membrane. N474 carries N-linked (GlcNAc...) asparagine glycosylation.

It belongs to the amino acid/polyamine transporter 2 family. Amino acid/auxin permease (AAAP) (TC 2.A.18.1) subfamily. As to expression, shoots and roots of nodulating plants. Higher levels in roots, flowers and stems, lower in nodules, leaves, petioles and shoot apices.

The protein resides in the cell membrane. Carrier protein involved in proton-driven auxin influx. Mediates the formation of auxin gradient from developing leaves (site of auxin biosynthesis) to tips by contributing to the loading of auxin in vascular tissues and facilitating acropetal (base to tip) auxin transport within inner tissues of the root apex, and basipetal (tip to base) auxin transport within outer tissues of the root apex. May be involved in lateral roots and nodules formation. The protein is Auxin transporter-like protein 1 (LAX1) of Medicago truncatula (Barrel medic).